Here is a 103-residue protein sequence, read N- to C-terminus: Large ribosomal subunit protein bL32m (103 aa).

A mitochondrion-targeting transit peptide spans 1–47 (MALLRGNSLAISQKMLSVFQASALPHISLRIFISPPSIANIWNSILL). Positions 77, 80, 90, and 93 each coordinate Zn(2+).

The protein belongs to the bacterial ribosomal protein bL32 family. As to quaternary structure, component of the mitochondrial large ribosomal subunit (mt-LSU). Mature yeast 74S mitochondrial ribosomes consist of a small (37S) and a large (54S) subunit. The 37S small subunit contains a 15S ribosomal RNA (15S mt-rRNA) and at least 32 different proteins. The 54S large subunit contains a 21S rRNA (21S mt-rRNA) and at least 45 different proteins. bL32m has a zinc binding site. In terms of processing, MRPL32 precursor is processed by the m-AAA protease, which cleaves the N-terminal transit peptide. Cleavage by the m-AAA protease takes place prior to assembly into the large subunit, an essential step for mitochondrial ribosome (mitoribosome) assembly. Proper processing by the m-AAA protease is dependent on the zinc-binding region within the tightly folded C-terminal domain of MRPL32: zinc-dependent folding halts degradation initiated from the N-terminus and triggers the release of mature mrpl32.

The protein resides in the mitochondrion. Its function is as follows. Component of the mitochondrial ribosome (mitoribosome), a dedicated translation machinery responsible for the synthesis of mitochondrial genome-encoded proteins, including at least some of the essential transmembrane subunits of the mitochondrial respiratory chain. The mitoribosomes are attached to the mitochondrial inner membrane and translation products are cotranslationally integrated into the membrane. This is Large ribosomal subunit protein bL32m (mrpl32) from Schizosaccharomyces pombe (strain 972 / ATCC 24843) (Fission yeast).